The following is a 628-amino-acid chain: (+)-alpha pinene synthase 1, chloroplastic (628 aa).

The transit peptide at 1–18 (MALVSAVPLNSKLCLCRT) directs the protein to the chloroplast. Residues aspartate 379, aspartate 383, and aspartate 531 each contribute to the Mg(2+) site. Positions 379–383 (DDIYD) match the DDXXD motif motif.

The protein belongs to the terpene synthase family. Tpsd subfamily. Requires Mg(2+) as cofactor. Mn(2+) is required as a cofactor.

Its subcellular location is the plastid. The protein localises to the chloroplast. The catalysed reaction is (2E)-geranyl diphosphate = (1R,5R)-alpha-pinene + diphosphate. The protein operates within terpene metabolism; oleoresin biosynthesis. Its pathway is secondary metabolite biosynthesis; terpenoid biosynthesis. In terms of biological role, monoterpene synthase (TPS) involved in the biosynthesis of monoterpene natural products included in conifer oleoresin secretions and volatile emissions; these compounds contribute to biotic and abiotic stress defense against herbivores and pathogens. Catalyzes the conversion of (2E)-geranyl diphosphate (GPP) to (+)-alpha-pinene. This Pinus banksiana (Jack pine) protein is (+)-alpha pinene synthase 1, chloroplastic.